We begin with the raw amino-acid sequence, 228 residues long: Uracil-DNA glycosylase (228 aa).

The Proton acceptor role is filled by aspartate 64.

Belongs to the uracil-DNA glycosylase (UDG) superfamily. UNG family.

It localises to the cytoplasm. The catalysed reaction is Hydrolyzes single-stranded DNA or mismatched double-stranded DNA and polynucleotides, releasing free uracil.. Its function is as follows. Excises uracil residues from the DNA which can arise as a result of misincorporation of dUMP residues by DNA polymerase or due to deamination of cytosine. This Yersinia enterocolitica serotype O:8 / biotype 1B (strain NCTC 13174 / 8081) protein is Uracil-DNA glycosylase.